We begin with the raw amino-acid sequence, 223 residues long: Endonuclease NucS (223 aa).

The protein belongs to the NucS endonuclease family.

Its subcellular location is the cytoplasm. Functionally, cleaves both 3' and 5' ssDNA extremities of branched DNA structures. In Mycobacterium marinum (strain ATCC BAA-535 / M), this protein is Endonuclease NucS.